A 346-amino-acid polypeptide reads, in one-letter code: Golgi to ER traffic protein 4 (346 aa).

The interval 317-346 is disordered; it reads GQNQGGSRRTPQGRSQSKTVEAPPASMELD. A compositionally biased stretch (polar residues) spans 321-335; it reads GGSRRTPQGRSQSKT.

Belongs to the GET4 family. As to quaternary structure, component of the get4/get5/sgt2 sorting complex.

Its subcellular location is the cytoplasm. In terms of biological role, component of the get4/get5/sgt2 sorting complex involved in the GET (guided entry of TA proteins) pathway that leads to the insertion of tail-anchored (TA) proteins into the endoplasmic reticulum. Get4 and get5 form an obligate complex that catalyzes the transfer of tail-anchored proteins destined to the endoplasmic reticulum from sgt2 to the cytosolic targeting factor which then targets the TA protein to the ER membrane via get1/get2. The sequence is that of Golgi to ER traffic protein 4 from Aspergillus fumigatus (strain ATCC MYA-4609 / CBS 101355 / FGSC A1100 / Af293) (Neosartorya fumigata).